The following is a 233-amino-acid chain: Bcl-2-like protein 1 (233 aa).

A BH4 motif is present at residues 4–24; that stretch reads SNRELVVDFLSYKLSQKGYSW. The interval 28–71 is disordered; sequence SDVEENRTEAPEGTESEMETPSAINGNPSWHLADSPAVNGATGH. At S49 the chain carries Phosphoserine; by PLK3. Position 62 is a phosphoserine; by CDK1 (S62). The BH3 signature appears at 86 to 100; the sequence is VKQALREAGDEFELR. A BH1 motif is present at residues 129-148; sequence ELFRDGVNWGRIVAFFSFGG. Residues 180–195 carry the BH2 motif; sequence PWIQENGGWDTFVELY. Residues 210-226 form a helical membrane-spanning segment; it reads FNRWFLTGMTVAGVVLL.

The protein belongs to the Bcl-2 family. In terms of assembly, homodimer. Interacts with BCL2L11. Interacts with BAD. Interacts with PGAM5. Interacts with HEBP2. Interacts with p53/TP53 and BBC3; interaction with BBC3 disrupts the interaction with p53/TP53. Interacts with ATP5F1A and ATP5F1B; the interactions mediate the association of isoform Bcl-X(L) with the mitochondrial membrane ATP synthase F(1)F(0) ATP synthase. Interacts with VDAC1. Interacts with BCL2L11 (via BH3). Interacts with RNF183. Interacts with GIMAP3/IAN4 and GIMAP5/IAN5. Interacts with GIMAP5 and HSPA8/HSC70; the interaction between HSPA8 and BCL2L1 is impaired in the absence of GIMAP5. Interacts with isoform 4 of CLU; this interaction releases and activates BAX and promotes cell death. Forms heterodimers with BAX, BAK or BCL2; heterodimerization with BAX does not seem to be required for anti-apoptotic activity. Interacts with isoform 1 of SIVA1; the interaction inhibits the anti-apoptotic activity. Interacts with IKZF3. Interacts with RTL10/BOP. Interacts with DNM1L and CLTA; DNM1L and BCL2L1 isoform BCL-X(L) may form a complex in synaptic vesicles that also contains clathrin and MFF. Interacts (via the loop between motifs BH4 and BH3) with NLRP1 (via LRR repeats), but not with NLRP2, NLRP3, NLRP4, PYCARD, nor MEFV. Interacts with BECN1. In terms of processing, proteolytically cleaved by caspases during apoptosis. The cleaved protein, lacking the BH4 motif, has pro-apoptotic activity. Post-translationally, phosphorylated on Ser-62 by CDK1. This phosphorylation is partial in normal mitotic cells, but complete in G2-arrested cells upon DNA-damage, thus promoting subsequent apoptosis probably by triggering caspases-mediated proteolysis. Phosphorylated by PLK3, leading to regulate the G2 checkpoint and progression to cytokinesis during mitosis. Phosphorylation at Ser-49 appears during the S phase and G2, disappears rapidly in early mitosis during prometaphase, metaphase and early anaphase, and re-appears during telophase and cytokinesis. Ubiquitinated by RNF183 during prolonged ER stress, leading to degradation by the proteosome. In terms of tissue distribution, bcl-X(S) is expressed at high levels in cells that undergo a high rate of turnover, such as developing lymphocytes. In contrast, Bcl-X(L) is found in tissues containing long-lived postmitotic cells, such as adult brain.

The protein resides in the mitochondrion inner membrane. It localises to the mitochondrion outer membrane. Its subcellular location is the mitochondrion matrix. The protein localises to the cytoplasmic vesicle. It is found in the secretory vesicle. The protein resides in the synaptic vesicle membrane. It localises to the cytoplasm. Its subcellular location is the cytosol. The protein localises to the cytoskeleton. It is found in the microtubule organizing center. The protein resides in the centrosome. It localises to the nucleus membrane. In terms of biological role, potent inhibitor of cell death. Inhibits activation of caspases. Appears to regulate cell death by blocking the voltage-dependent anion channel (VDAC) by binding to it and preventing the release of the caspase activator, CYC1, from the mitochondrial membrane. Also acts as a regulator of G2 checkpoint and progression to cytokinesis during mitosis. Isoform Bcl-X(L) also regulates presynaptic plasticity, including neurotransmitter release and recovery, number of axonal mitochondria as well as size and number of synaptic vesicle clusters. During synaptic stimulation, increases ATP availability from mitochondria through regulation of mitochondrial membrane ATP synthase F(1)F(0) activity and regulates endocytic vesicle retrieval in hippocampal neurons through association with DMN1L and stimulation of its GTPase activity in synaptic vesicles. May attenuate inflammation impairing NLRP1-inflammasome activation, hence CASP1 activation and IL1B release. Its function is as follows. Isoform Bcl-X(S) promotes apoptosis. In Homo sapiens (Human), this protein is Bcl-2-like protein 1 (BCL2L1).